A 40-amino-acid chain; its full sequence is ARERMDEEELEAFYNCVRIIVKNKHLLKSDVRNVYEEQLD.

It belongs to the potexviruses/carlaviruses RNA replication protein family.

It carries out the reaction RNA(n) + a ribonucleoside 5'-triphosphate = RNA(n+1) + diphosphate. The catalysed reaction is ATP + H2O = ADP + phosphate + H(+). In terms of biological role, RNA replication. The central part of this protein possibly functions as an ATP-binding helicase. The chain is RNA replication protein from Lily symptomless virus (LSV).